The chain runs to 185 residues: Ribosome-recycling factor (185 aa).

The protein belongs to the RRF family.

The protein resides in the cytoplasm. Functionally, responsible for the release of ribosomes from messenger RNA at the termination of protein biosynthesis. May increase the efficiency of translation by recycling ribosomes from one round of translation to another. The protein is Ribosome-recycling factor of Dichelobacter nodosus (strain VCS1703A).